We begin with the raw amino-acid sequence, 190 residues long: UPF0301 protein PSPTO_5037 (190 aa).

It belongs to the UPF0301 (AlgH) family.

The polypeptide is UPF0301 protein PSPTO_5037 (Pseudomonas syringae pv. tomato (strain ATCC BAA-871 / DC3000)).